Reading from the N-terminus, the 126-residue chain is Aspartate 1-decarboxylase (126 aa).

Serine 25 functions as the Schiff-base intermediate with substrate; via pyruvic acid in the catalytic mechanism. Serine 25 is modified (pyruvic acid (Ser)). Threonine 57 contributes to the substrate binding site. Tyrosine 58 serves as the catalytic Proton donor. Residue 72-74 (GAA) participates in substrate binding.

It belongs to the PanD family. In terms of assembly, heterooctamer of four alpha and four beta subunits. Requires pyruvate as cofactor. In terms of processing, is synthesized initially as an inactive proenzyme, which is activated by self-cleavage at a specific serine bond to produce a beta-subunit with a hydroxyl group at its C-terminus and an alpha-subunit with a pyruvoyl group at its N-terminus.

It localises to the cytoplasm. The catalysed reaction is L-aspartate + H(+) = beta-alanine + CO2. It participates in cofactor biosynthesis; (R)-pantothenate biosynthesis; beta-alanine from L-aspartate: step 1/1. Catalyzes the pyruvoyl-dependent decarboxylation of aspartate to produce beta-alanine. The chain is Aspartate 1-decarboxylase from Campylobacter jejuni subsp. jejuni serotype O:6 (strain 81116 / NCTC 11828).